The sequence spans 196 residues: Elongation factor Ts (196 aa).

The interval 80–83 (TDFV) is involved in Mg(2+) ion dislocation from EF-Tu.

This sequence belongs to the EF-Ts family.

It localises to the cytoplasm. In terms of biological role, associates with the EF-Tu.GDP complex and induces the exchange of GDP to GTP. It remains bound to the aminoacyl-tRNA.EF-Tu.GTP complex up to the GTP hydrolysis stage on the ribosome. In Thermus thermophilus (strain ATCC BAA-163 / DSM 7039 / HB27), this protein is Elongation factor Ts.